The chain runs to 454 residues: Methylenetetrahydrofolate--tRNA-(uracil-5-)-methyltransferase TrmFO (454 aa).

Position 9–14 (9–14) interacts with FAD; sequence GAGLAG. The tract at residues 432–454 is disordered; that stretch reads LERVSPPSRETGEPTGAEQVDLA.

The protein belongs to the MnmG family. TrmFO subfamily. FAD is required as a cofactor.

It localises to the cytoplasm. The enzyme catalyses uridine(54) in tRNA + (6R)-5,10-methylene-5,6,7,8-tetrahydrofolate + NADH + H(+) = 5-methyluridine(54) in tRNA + (6S)-5,6,7,8-tetrahydrofolate + NAD(+). It catalyses the reaction uridine(54) in tRNA + (6R)-5,10-methylene-5,6,7,8-tetrahydrofolate + NADPH + H(+) = 5-methyluridine(54) in tRNA + (6S)-5,6,7,8-tetrahydrofolate + NADP(+). In terms of biological role, catalyzes the folate-dependent formation of 5-methyl-uridine at position 54 (M-5-U54) in all tRNAs. The chain is Methylenetetrahydrofolate--tRNA-(uracil-5-)-methyltransferase TrmFO from Pelobacter propionicus (strain DSM 2379 / NBRC 103807 / OttBd1).